A 392-amino-acid polypeptide reads, in one-letter code: UPF0229 protein CPE1333 (392 aa).

The disordered stretch occupies residues Val-75 to Lys-100. Residues Gly-80–Lys-94 are compositionally biased toward basic and acidic residues.

The protein belongs to the UPF0229 family.

The chain is UPF0229 protein CPE1333 from Clostridium perfringens (strain 13 / Type A).